A 354-amino-acid chain; its full sequence is Sphingosine-1-phosphate phosphatase 2 (354 aa).

A run of 4 helical transmembrane segments spans residues 43–63 (YLFR…FLPF), 76–96 (LVVI…ILKW), 115–135 (YGMP…LLIS), and 140–160 (YQYP…LVCL). A phosphatase sequence motif I region spans residues 91–99 (KDILKWPRP). A phosphatase sequence motif II region spans residues 118-121 (PSTH). Histidine 121 (proton donor) is an active-site residue. Residues 161-172 (SRLYTGMHTVLD) are phosphatase sequence motif III. Histidine 168 (nucleophile) is an active-site residue. A run of 5 helical transmembrane segments spans residues 173–193 (ILGG…AWTL), 202–222 (PLFP…YPVS), 235–255 (IVAA…FQLV), 273–293 (TDML…ILLV), and 334–354 (TSVG…LGLL).

Belongs to the type 2 lipid phosphate phosphatase family. Highly expressed in pancreatic islets. Expressed in lung, small interstince, colon, kideny and brain.

It is found in the endoplasmic reticulum membrane. The enzyme catalyses sphinganine 1-phosphate + H2O = sphinganine + phosphate. It catalyses the reaction sphing-4-enine 1-phosphate + H2O = sphing-4-enine + phosphate. The catalysed reaction is (4R)-hydroxysphinganine 1-phosphate + H2O = (4R)-hydroxysphinganine + phosphate. Has specific phosphohydrolase activity towards sphingoid base 1-phosphates. Has high phosphohydrolase activity against dihydrosphingosine-1-phosphate and sphingosine-1-phosphate (S1P) in vitro. Sphingosine-1-phosphate phosphatase activity is needed for efficient recycling of sphingosine into the sphingolipid synthesis pathway. May play a role in attenuating intracellular sphingosine 1-phosphate (S1P) signaling. May play a role in pro-inflammatory signaling. Plays a role in the regulation of pancreatic islet beta-cell endoplasmic reticulum stress and proliferation. The chain is Sphingosine-1-phosphate phosphatase 2 from Mus musculus (Mouse).